A 132-amino-acid polypeptide reads, in one-letter code: Transmembrane protein 170B (132 aa).

At 1–37 (MRAEGADHSMINLSVQQVLSLWAHGTVLRNLTEMWYW) the chain is on the extracellular side. Asn-12 is a glycosylation site (N-linked (GlcNAc...) asparagine). Residues 38-58 (IFLWALFSSLFVHGAAGVLMF) traverse the membrane as a helical segment. Topologically, residues 59–68 (VMLQRHRQGR) are cytoplasmic. Residues 69–89 (VLSIIAVSIGFLASVTGAMIT) traverse the membrane as a helical segment. Residues 90-104 (SAAVAGIYRVAGKNM) are Extracellular-facing. Residues 105–125 (APLEALVWGVGQTVLTLIISF) form a helical membrane-spanning segment. Topologically, residues 126 to 132 (SRILATL) are cytoplasmic.

Belongs to the TMEM170 family. In terms of assembly, interacts with CTNNB1.

The protein resides in the cell membrane. In Rattus norvegicus (Rat), this protein is Transmembrane protein 170B (Tmem170b).